The sequence spans 113 residues: Probable 4-amino-4-deoxy-L-arabinose-phosphoundecaprenol flippase subunit ArnE (113 aa).

The next 3 helical transmembrane spans lie at Ser-37 to Leu-57, Ile-62 to Ala-82, and Ala-91 to Leu-111. The region spanning Ala-45–Leu-111 is the EamA domain.

This sequence belongs to the ArnE family. As to quaternary structure, heterodimer of ArnE and ArnF.

The protein localises to the cell inner membrane. Its pathway is bacterial outer membrane biogenesis; lipopolysaccharide biosynthesis. In terms of biological role, translocates 4-amino-4-deoxy-L-arabinose-phosphoundecaprenol (alpha-L-Ara4N-phosphoundecaprenol) from the cytoplasmic to the periplasmic side of the inner membrane. The chain is Probable 4-amino-4-deoxy-L-arabinose-phosphoundecaprenol flippase subunit ArnE from Photorhabdus laumondii subsp. laumondii (strain DSM 15139 / CIP 105565 / TT01) (Photorhabdus luminescens subsp. laumondii).